Consider the following 263-residue polypeptide: Renal glandular kallikrein (263 aa).

Residues 1 to 18 (MWFLILFLALFLGGIDAA) form the signal peptide. Residues 19–24 (PPVQSR) constitute a propeptide, activation peptide. The 236-residue stretch at 25–260 (IIGGFNCEKN…YRSWIKDVMA (236 aa)) folds into the Peptidase S1 domain. 5 disulfides stabilise this stretch: C31–C175, C50–C66, C153–C221, C186–C200, and C211–C236. Catalysis depends on H65, which acts as the Charge relay system. N102 carries an N-linked (GlcNAc...) asparagine glycan. D121 functions as the Charge relay system in the catalytic mechanism. S215 (charge relay system) is an active-site residue.

The protein belongs to the peptidase S1 family. Kallikrein subfamily.

The enzyme catalyses Preferential cleavage of Arg-|-Xaa bonds in small molecule substrates. Highly selective action to release kallidin (lysyl-bradykinin) from kininogen involves hydrolysis of Met-|-Xaa or Leu-|-Xaa.. Glandular kallikreins cleave Met-Lys and Arg-Ser bonds in kininogen to release Lys-bradykinin. This is Renal glandular kallikrein from Mastomys natalensis (African soft-furred rat).